Reading from the N-terminus, the 281-residue chain is Ornithine lipid ester-linked acyl 2-hydroxylase (281 aa).

A compositionally biased stretch (polar residues) spans 1-24; that stretch reads MTESPLSAPAPTSNQSPAPEQTFG. The segment at 1 to 29 is disordered; that stretch reads MTESPLSAPAPTSNQSPAPEQTFGTAGIA.

It belongs to the aspartyl/asparaginyl beta-hydroxylase family.

The catalysed reaction is an N(2)-[(3R)-3-(2-saturated-acyloxy)acyl]-L-ornithine lipid + 2-oxoglutarate + O2 = a 2-hydroxyornithine lipid + succinate + CO2. The protein operates within lipid metabolism. Involved in the biosynthesis of ornithine lipids (OLs), which are phosphorus-free membrane lipids. Catalyzes the hydroxylation at the 2 position of the secondary fatty acid of OL. Contributes to symbiotic performance and acid tolerance. The protein is Ornithine lipid ester-linked acyl 2-hydroxylase of Rhizobium tropici.